A 419-amino-acid polypeptide reads, in one-letter code: Adenylosuccinate synthetase (419 aa).

Residues 15-21 (GDEGKGK) and 43-45 (GHT) each bind GTP. Catalysis depends on aspartate 16, which acts as the Proton acceptor. Positions 16 and 43 each coordinate Mg(2+). Residues 16–19 (DEGK), 41–44 (NAGH), threonine 128, arginine 142, glutamine 223, threonine 238, and arginine 302 contribute to the IMP site. Histidine 44 serves as the catalytic Proton donor. 298 to 304 (TTTGRAR) is a substrate binding site. Residues arginine 304, 330–332 (KLD), and 408–410 (STS) each bind GTP.

Belongs to the adenylosuccinate synthetase family. Homodimer. It depends on Mg(2+) as a cofactor.

The protein resides in the cytoplasm. The enzyme catalyses IMP + L-aspartate + GTP = N(6)-(1,2-dicarboxyethyl)-AMP + GDP + phosphate + 2 H(+). The protein operates within purine metabolism; AMP biosynthesis via de novo pathway; AMP from IMP: step 1/2. Functionally, plays an important role in the de novo pathway of purine nucleotide biosynthesis. Catalyzes the first committed step in the biosynthesis of AMP from IMP. The chain is Adenylosuccinate synthetase from Sulfurimonas denitrificans (strain ATCC 33889 / DSM 1251) (Thiomicrospira denitrificans (strain ATCC 33889 / DSM 1251)).